The primary structure comprises 211 residues: Peptidyl-prolyl cis-trans isomerase-like 3 (211 aa).

The PPIase cyclophilin-type domain maps to 1–204 (MSVTLHTTHG…ETLRINRVTI (204 aa)).

It belongs to the cyclophilin-type PPIase family. PPIL3 subfamily.

It catalyses the reaction [protein]-peptidylproline (omega=180) = [protein]-peptidylproline (omega=0). PPIases accelerate the folding of proteins. It catalyzes the cis-trans isomerization of proline imidic peptide bonds in oligopeptides. The polypeptide is Peptidyl-prolyl cis-trans isomerase-like 3 (cyp10) (Emericella nidulans (strain FGSC A4 / ATCC 38163 / CBS 112.46 / NRRL 194 / M139) (Aspergillus nidulans)).